We begin with the raw amino-acid sequence, 439 residues long: Adenylosuccinate synthetase (439 aa).

GTP is bound by residues 25 to 31 and 53 to 55; these read GDEGKGK and GHT. Asp-26 acts as the Proton acceptor in catalysis. Mg(2+) is bound by residues Asp-26 and Gly-53. IMP is bound by residues 26-29, 51-54, Thr-146, Arg-160, Asn-237, Thr-252, and Arg-316; these read DEGK and NAGH. Residue His-54 is the Proton donor of the active site. 312–318 lines the substrate pocket; that stretch reads VTTGRRR. Residues Arg-318, 344–346, and 426–428 contribute to the GTP site; these read KLD and GVG.

It belongs to the adenylosuccinate synthetase family. As to quaternary structure, homodimer. It depends on Mg(2+) as a cofactor.

The protein resides in the cytoplasm. The enzyme catalyses IMP + L-aspartate + GTP = N(6)-(1,2-dicarboxyethyl)-AMP + GDP + phosphate + 2 H(+). It participates in purine metabolism; AMP biosynthesis via de novo pathway; AMP from IMP: step 1/2. In terms of biological role, plays an important role in the de novo pathway and in the salvage pathway of purine nucleotide biosynthesis. Catalyzes the first committed step in the biosynthesis of AMP from IMP. The polypeptide is Adenylosuccinate synthetase (Mycosarcoma maydis (Corn smut fungus)).